The following is a 431-amino-acid chain: MNDHKGLGGLDTEATPGSFGAGEPPRALGQAGLAAENELDAPLASKLMTVNLGPSHPAMHGVTRAVVELDGEMIRSMKLDIGFLHRGFEKSCENVTWTQCFPYTDRLNYVSSIMNNVGFALAVEKLCKLDVPERAKYLRVVTSEIHRICDHLTLVGAMAMELGAMTVFLYAIEARDIIYDRLAELCGARLTSNYGRIGGVARDTPDGWIEKTEKTLDRVKGYVDEIDQLVSRNRIFIDRTRGTGVVPRADAIELGFTGPCLRASGEPYDLRKAAPYLVYDRIDFDIPVGTNGDNFDRFQMRMEEMRQSDRIIRQCFAQMEPGEIAVQDFRYVLPPKPLVYGTIEGLMAHFKIIMEGIQVPAGEAYGYTEAANGELGFYVVSDGGGRPYKLGLRAPGWPMLAALPFMSVGSLLSDLIPTFDSINMIGGEVEQ.

Residues 1-27 (MNDHKGLGGLDTEATPGSFGAGEPPRA) form a disordered region.

This sequence belongs to the complex I 49 kDa subunit family. NDH-1 is composed of 14 different subunits. Subunits NuoB, C, D, E, F, and G constitute the peripheral sector of the complex.

It localises to the cell inner membrane. It carries out the reaction a quinone + NADH + 5 H(+)(in) = a quinol + NAD(+) + 4 H(+)(out). Functionally, NDH-1 shuttles electrons from NADH, via FMN and iron-sulfur (Fe-S) centers, to quinones in the respiratory chain. The immediate electron acceptor for the enzyme in this species is believed to be ubiquinone. Couples the redox reaction to proton translocation (for every two electrons transferred, four hydrogen ions are translocated across the cytoplasmic membrane), and thus conserves the redox energy in a proton gradient. In Anaeromyxobacter sp. (strain Fw109-5), this protein is NADH-quinone oxidoreductase subunit D 2.